We begin with the raw amino-acid sequence, 202 residues long: Putative scarecrow-like protein 16 (202 aa).

The interval 1 to 26 is VHIID; sequence MQIPTLIDSMANKLHKKPPPLLKLTV. In terms of domain architecture, GRAS spans 1–202; it reads MQIPTLIDSM…RVERLEPKSR (202 aa). Residues 45 to 82 are leucine repeat II (LRII); that stretch reads ELGSKLVNFATTRNVAMEFRIISSSYSDGLSSLIEQLR. A PFYRE region spans residues 92 to 184; it reads LVVNCHMMLH…EADISWKIDN (93 aa). Residues 187-202 form an SAW region; the sequence is AKEGAERVERLEPKSR.

This sequence belongs to the GRAS family. Expressed in seedlings, leaves and flowers.

Its subcellular location is the nucleus. In terms of biological role, probable transcription factor involved in plant development. This Arabidopsis thaliana (Mouse-ear cress) protein is Putative scarecrow-like protein 16 (SCL16).